Consider the following 469-residue polypeptide: UDP-N-acetylmuramate--L-alanine ligase (469 aa).

112–118 (GTHGKTT) serves as a coordination point for ATP.

Belongs to the MurCDEF family.

It localises to the cytoplasm. The enzyme catalyses UDP-N-acetyl-alpha-D-muramate + L-alanine + ATP = UDP-N-acetyl-alpha-D-muramoyl-L-alanine + ADP + phosphate + H(+). The protein operates within cell wall biogenesis; peptidoglycan biosynthesis. Cell wall formation. The protein is UDP-N-acetylmuramate--L-alanine ligase of Leptothrix cholodnii (strain ATCC 51168 / LMG 8142 / SP-6) (Leptothrix discophora (strain SP-6)).